An 81-amino-acid polypeptide reads, in one-letter code: Photosystem I iron-sulfur center (81 aa).

4Fe-4S ferredoxin-type domains lie at 2–31 (AHSVKIYDTCIGCTQCVRACPTDVLEMVPW) and 39–68 (IASAPRTEDCVGCKRCESACPTDYLSVRVY). 8 residues coordinate [4Fe-4S] cluster: Cys11, Cys14, Cys17, Cys21, Cys48, Cys51, Cys54, and Cys58.

The eukaryotic PSI reaction center is composed of at least 11 subunits. [4Fe-4S] cluster serves as cofactor.

It localises to the plastid. Its subcellular location is the chloroplast thylakoid membrane. The enzyme catalyses reduced [plastocyanin] + hnu + oxidized [2Fe-2S]-[ferredoxin] = oxidized [plastocyanin] + reduced [2Fe-2S]-[ferredoxin]. In terms of biological role, apoprotein for the two 4Fe-4S centers FA and FB of photosystem I (PSI); essential for photochemical activity. FB is the terminal electron acceptor of PSI, donating electrons to ferredoxin. The C-terminus interacts with PsaA/B/D and helps assemble the protein into the PSI complex. Required for binding of PsaD and PsaE to PSI. PSI is a plastocyanin-ferredoxin oxidoreductase, converting photonic excitation into a charge separation, which transfers an electron from the donor P700 chlorophyll pair to the spectroscopically characterized acceptors A0, A1, FX, FA and FB in turn. The sequence is that of Photosystem I iron-sulfur center from Gnetum parvifolium (Small-leaved jointfir).